Here is a 173-residue protein sequence, read N- to C-terminus: Ribosome maturation factor RimM (173 aa).

The 75-residue stretch at 94 to 168 (SNESYLCDLL…LIRINPPKGL (75 aa)) folds into the PRC barrel domain.

This sequence belongs to the RimM family. Binds ribosomal protein uS19.

It is found in the cytoplasm. In terms of biological role, an accessory protein needed during the final step in the assembly of 30S ribosomal subunit, possibly for assembly of the head region. Essential for efficient processing of 16S rRNA. May be needed both before and after RbfA during the maturation of 16S rRNA. It has affinity for free ribosomal 30S subunits but not for 70S ribosomes. The polypeptide is Ribosome maturation factor RimM (Lawsonia intracellularis (strain PHE/MN1-00)).